Here is a 241-residue protein sequence, read N- to C-terminus: Small ribosomal subunit protein uS2 (241 aa).

Belongs to the universal ribosomal protein uS2 family.

The sequence is that of Small ribosomal subunit protein uS2 from Yersinia enterocolitica serotype O:8 / biotype 1B (strain NCTC 13174 / 8081).